Here is a 274-residue protein sequence, read N- to C-terminus: Large ribosomal subunit protein uL2 (274 aa).

A disordered region spans residues 224–274; that stretch reads VAMNPVDHPHGGGEGRTSGGRHPVTPWGIPTKGYKTRRNKRSNKLIVQKRK. Positions 257–274 are enriched in basic residues; it reads YKTRRNKRSNKLIVQKRK.

It belongs to the universal ribosomal protein uL2 family. In terms of assembly, part of the 50S ribosomal subunit. Forms a bridge to the 30S subunit in the 70S ribosome.

In terms of biological role, one of the primary rRNA binding proteins. Required for association of the 30S and 50S subunits to form the 70S ribosome, for tRNA binding and peptide bond formation. It has been suggested to have peptidyltransferase activity; this is somewhat controversial. Makes several contacts with the 16S rRNA in the 70S ribosome. This Francisella tularensis subsp. tularensis (strain FSC 198) protein is Large ribosomal subunit protein uL2.